Consider the following 360-residue polypeptide: Protein phosphatase 1 regulatory subunit 7 (360 aa).

The tract at residues 1–64 is disordered; that stretch reads MAAERGAGQQ…GEEDPEEEHE (64 aa). Position 2 is an N-acetylalanine (A2). S12, S24, S27, S44, and S47 each carry phosphoserine. Basic and acidic residues predominate over residues 17–34; sequence EVDRRVESEESGDEEGKK. Residues 53–63 show a composition bias toward acidic residues; it reads ERGEEDPEEEH. LRR repeat units lie at residues 77–98, 99–120, 121–142, 143–164, 165–186, 187–208, 209–230, 231–252, 253–274, 275–296, and 297–318; these read DAED…EVLK, KVKT…EELQ, SLRE…EALT, ELEI…DKVT, QLKK…SNLH, QLQM…DTLT, NLES…DALT, NLTV…QNLV, NLQE…ENNN, KLTM…SHLT, and EPQE…DELK. S322 carries the phosphoserine modification. Residues 331-360 enclose the LRRCT domain; that stretch reads NPLQKDPQYRRKVMLALPSVRQIDATFVRF.

It belongs to the SDS22 family. As to quaternary structure, interacts with PPP1CA, PPP1CB and PPP1CC/PPP1G.

The protein localises to the nucleus. Functionally, regulatory subunit of protein phosphatase 1. In Pongo abelii (Sumatran orangutan), this protein is Protein phosphatase 1 regulatory subunit 7 (PPP1R7).